We begin with the raw amino-acid sequence, 589 residues long: Aspartate--tRNA ligase (589 aa).

Glutamate 176 contributes to the L-aspartate binding site. An aspartate region spans residues 200-203 (QLFK). Arginine 222 is an L-aspartate binding site. ATP contacts are provided by residues 222 to 224 (RDE) and glutamine 231. L-aspartate is bound at residue histidine 449. Glutamate 483 contacts ATP. Arginine 490 contributes to the L-aspartate binding site. Residue 535–538 (GLDR) coordinates ATP.

Belongs to the class-II aminoacyl-tRNA synthetase family. Type 1 subfamily. In terms of assembly, homodimer.

The protein localises to the cytoplasm. The enzyme catalyses tRNA(Asp) + L-aspartate + ATP = L-aspartyl-tRNA(Asp) + AMP + diphosphate. Functionally, catalyzes the attachment of L-aspartate to tRNA(Asp) in a two-step reaction: L-aspartate is first activated by ATP to form Asp-AMP and then transferred to the acceptor end of tRNA(Asp). This Enterococcus faecalis (strain ATCC 700802 / V583) protein is Aspartate--tRNA ligase.